We begin with the raw amino-acid sequence, 279 residues long: Digeranylgeranylglyceryl phosphate synthase (279 aa).

8 helical membrane-spanning segments follow: residues valine 14–phenylalanine 34, phenylalanine 36–glycine 56, leucine 94–isoleucine 114, isoleucine 131–glycine 153, isoleucine 157–isoleucine 175, isoleucine 201–leucine 221, phenylalanine 224–leucine 244, and serine 259–methionine 279.

This sequence belongs to the UbiA prenyltransferase family. DGGGP synthase subfamily. It depends on Mg(2+) as a cofactor.

It is found in the cell membrane. The catalysed reaction is sn-3-O-(geranylgeranyl)glycerol 1-phosphate + (2E,6E,10E)-geranylgeranyl diphosphate = 2,3-bis-O-(geranylgeranyl)-sn-glycerol 1-phosphate + diphosphate. It participates in membrane lipid metabolism; glycerophospholipid metabolism. In terms of biological role, prenyltransferase that catalyzes the transfer of the geranylgeranyl moiety of geranylgeranyl diphosphate (GGPP) to the C2 hydroxyl of (S)-3-O-geranylgeranylglyceryl phosphate (GGGP). This reaction is the second ether-bond-formation step in the biosynthesis of archaeal membrane lipids. In Methanococcus aeolicus (strain ATCC BAA-1280 / DSM 17508 / OCM 812 / Nankai-3), this protein is Digeranylgeranylglyceryl phosphate synthase.